Here is a 1362-residue protein sequence, read N- to C-terminus: DNA-directed RNA polymerase subunit beta (1362 aa).

It belongs to the RNA polymerase beta chain family. As to quaternary structure, the RNAP catalytic core consists of 2 alpha, 1 beta, 1 beta' and 1 omega subunit. When a sigma factor is associated with the core the holoenzyme is formed, which can initiate transcription.

It carries out the reaction RNA(n) + a ribonucleoside 5'-triphosphate = RNA(n+1) + diphosphate. Its function is as follows. DNA-dependent RNA polymerase catalyzes the transcription of DNA into RNA using the four ribonucleoside triphosphates as substrates. In Acidithiobacillus ferrooxidans (strain ATCC 23270 / DSM 14882 / CIP 104768 / NCIMB 8455) (Ferrobacillus ferrooxidans (strain ATCC 23270)), this protein is DNA-directed RNA polymerase subunit beta.